We begin with the raw amino-acid sequence, 273 residues long: Nitrogenase iron protein (273 aa).

8–15 (GKGGIGKS) serves as a coordination point for ATP. C95 contacts [4Fe-4S] cluster. R98 carries the ADP-ribosylarginine; by dinitrogenase reductase ADP-ribosyltransferase modification. C130 lines the [4Fe-4S] cluster pocket.

This sequence belongs to the NifH/BchL/ChlL family. Homodimer. It depends on [4Fe-4S] cluster as a cofactor. The reversible ADP-ribosylation of Arg-98 inactivates the nitrogenase reductase and regulates nitrogenase activity.

It carries out the reaction N2 + 8 reduced [2Fe-2S]-[ferredoxin] + 16 ATP + 16 H2O = H2 + 8 oxidized [2Fe-2S]-[ferredoxin] + 2 NH4(+) + 16 ADP + 16 phosphate + 6 H(+). Functionally, the key enzymatic reactions in nitrogen fixation are catalyzed by the nitrogenase complex, which has 2 components: the iron protein and the molybdenum-iron protein. In Roseiflexus sp. (strain RS-1), this protein is Nitrogenase iron protein.